Consider the following 525-residue polypeptide: Ankyrin repeat domain-containing protein SOWAHC (525 aa).

The disordered stretch occupies residues 84-263 (CEGPSEPSGD…EESSGGGSVT (180 aa)). A Phosphoserine modification is found at serine 88. Over residues 101 to 112 (AEPEAPDGPAGP) the composition is skewed to low complexity. Serine 126, serine 213, and serine 226 each carry phosphoserine. Over residues 230–241 (SSGGGRGRGGGD) the composition is skewed to gly residues. Residues 242–251 (SDSASVASSS) show a composition bias toward low complexity. ANK repeat units follow at residues 301–330 (TGFT…KHQL) and 340–370 (GGYT…DVDI). Positions 434-525 (DGGDHHHHHH…TLRPKSNVFG (92 aa)) are disordered. A compositionally biased stretch (basic residues) spans 468-477 (IKPRLNKIRF). A compositionally biased stretch (basic and acidic residues) spans 489-509 (RDPEQPLEGRGEEGVGEERPV).

It belongs to the SOWAH family.

The chain is Ankyrin repeat domain-containing protein SOWAHC (SOWAHC) from Homo sapiens (Human).